Here is a 204-residue protein sequence, read N- to C-terminus: Factor arrest protein 3 (204 aa).

As to quaternary structure, component of a complex at least composed of FAR3, FAR7, FAR8, FAR10, FAR11 and VPS64.

Its subcellular location is the endoplasmic reticulum. Its function is as follows. Participates in the control of the reentry into the cell cycle following pheromone treatment. The chain is Factor arrest protein 3 (FAR3) from Saccharomyces cerevisiae (strain ATCC 204508 / S288c) (Baker's yeast).